We begin with the raw amino-acid sequence, 188 residues long: Ion-translocating oxidoreductase complex subunit B (188 aa).

The tract at residues 1–26 is hydrophobic; it reads MMSLWIAIGALSTLALVSGVVLGFAA. The region spanning 32–91 is the 4Fe-4S domain; sequence DEDPVVEQVDAILPQSQCGQCGYPGCRPYAEAVSTGGEKINKCAPGGEQVMLKLAELLAV. [4Fe-4S] cluster-binding residues include C49, C52, C57, C74, C117, C120, C123, C127, C147, C150, C153, and C157. 2 consecutive 4Fe-4S ferredoxin-type domains span residues 108 to 137 and 138 to 167; these read KVAF…GATR and AMHT…MIPV.

It belongs to the 4Fe4S bacterial-type ferredoxin family. RnfB subfamily. The complex is composed of six subunits: RnfA, RnfB, RnfC, RnfD, RnfE and RnfG. It depends on [4Fe-4S] cluster as a cofactor.

Its subcellular location is the cell inner membrane. Its function is as follows. Part of a membrane-bound complex that couples electron transfer with translocation of ions across the membrane. In Yersinia pestis bv. Antiqua (strain Antiqua), this protein is Ion-translocating oxidoreductase complex subunit B.